We begin with the raw amino-acid sequence, 277 residues long: Zaragozic acid A biosynthesis cluster protein 1 (277 aa).

The protein operates within secondary metabolite biosynthesis. Functionally, part of the gene cluster that mediates the biosynthesis of squalestatin S1 (SQS1, also known as zaragozic acid A), a heavily oxidized fungal polyketide that offers potent cholesterol lowering activity by targeting squalene synthase (SS). SQS1 is composed of a 2,8-dioxobicyclic[3.2.1]octane-3,4,5-tricarboxyclic acid core that is connected to two lipophilic polyketide arms. These initial steps feature the priming of an unusual benzoic acid starter unit onto the highly reducing polyketide synthase clz14, followed by oxaloacetate extension and product release to generate a tricarboxylic acid containing product. The phenylalanine ammonia lyase (PAL) clz10 and the acyl-CoA ligase clz12 are involved in transforming phenylalanine into benzoyl-CoA. The citrate synthase-like protein clz17 is involved in connecting the C-alpha-carbons of the hexaketide chain and oxaloacetate to afford the tricarboxylic acid unit. The potential hydrolytic enzymes, clz11 and clz13, are in close proximity to pks2 and may participate in product release. On the other side, the tetraketide arm is synthesized by a the squalestatin tetraketide synthase clz2 and enzymatically esterified to the core in the last biosynthetic step, by the acetyltransferase clz6. The biosynthesis of the tetraketide must involve 3 rounds of chain extension. After the first and second rounds methyl-transfer occurs, and in all rounds of extension the ketoreductase and dehydratase are active. The enoyl reductase and C-MeT of clz2 are not active in the final round of extension. The acetyltransferase clz6 appears to have a broad substrate selectivity for its acyl CoA substrate, allowing the in vitro synthesis of novel squalestatins. The biosynthesis of SQS1 requires several oxidative steps likely performed by oxidoreductases clz3, clz15 and clz16. Finally, in support of the identification of the cluster as being responsible for SQS1 production, the cluster contains a gene encoding a putative squalene synthase (SS) clz20, suggesting a likely mechanism for self-resistance. In Cochliobolus lunatus (Filamentous fungus), this protein is Zaragozic acid A biosynthesis cluster protein 1.